Here is a 427-residue protein sequence, read N- to C-terminus: Actin-related protein 3 (427 aa).

The protein belongs to the actin family. ARP3 subfamily. As to quaternary structure, component of the Arp2/3 complex composed of arp2, act2, arc1/p41-ARC, arc2/p34-ARC, arc3/p21-ARC, arc4/p20-ARC and arc5/p16-ARC.

Its subcellular location is the cytoplasm. It is found in the cytoskeleton. The protein resides in the actin patch. Its function is as follows. Functions as ATP-binding component of the Arp2/3 complex which is involved in regulation of actin polymerization and together with an activating nucleation-promoting factor (NPF) mediates the formation of branched actin networks. Seems to contact the pointed end of the daughter actin filament. May be involved in cytokinesis. In Schizosaccharomyces pombe (strain 972 / ATCC 24843) (Fission yeast), this protein is Actin-related protein 3 (act2).